A 69-amino-acid polypeptide reads, in one-letter code: Putative membrane protein insertion efficiency factor (69 aa).

It belongs to the UPF0161 family.

It localises to the cell inner membrane. Its function is as follows. Could be involved in insertion of integral membrane proteins into the membrane. This Aromatoleum aromaticum (strain DSM 19018 / LMG 30748 / EbN1) (Azoarcus sp. (strain EbN1)) protein is Putative membrane protein insertion efficiency factor.